The following is a 204-amino-acid chain: NAD(P)H-quinone oxidoreductase subunit M, chloroplastic (204 aa).

The transit peptide at Met-1–Ser-27 directs the protein to the chloroplast.

This sequence belongs to the NDH complex subunit M family. As to quaternary structure, part of the chloroplast NDH complex, composed of a mixture of chloroplast and nucleus encoded subunits. Component of the NDH subcomplex A, at least composed of ndhH, ndhI, ndhJ, ndhK, ndhL, ndhM, ndhN and ndhO.

It localises to the plastid. The protein localises to the chloroplast thylakoid membrane. It catalyses the reaction a plastoquinone + NADH + (n+1) H(+)(in) = a plastoquinol + NAD(+) + n H(+)(out). It carries out the reaction a plastoquinone + NADPH + (n+1) H(+)(in) = a plastoquinol + NADP(+) + n H(+)(out). Its function is as follows. NDH shuttles electrons from NAD(P)H:plastoquinone, via FMN and iron-sulfur (Fe-S) centers, to quinones in the photosynthetic chain and possibly in a chloroplast respiratory chain. The immediate electron acceptor for the enzyme in this species is believed to be plastoquinone. Couples the redox reaction to proton translocation, and thus conserves the redox energy in a proton gradient. The chain is NAD(P)H-quinone oxidoreductase subunit M, chloroplastic from Physcomitrium patens (Spreading-leaved earth moss).